The primary structure comprises 144 residues: Large-conductance mechanosensitive channel (144 aa).

Transmembrane regions (helical) follow at residues 16–36 and 86–106; these read VIDL…VDSV and GNFL…FLMV.

Belongs to the MscL family. As to quaternary structure, homopentamer.

It localises to the cell inner membrane. Channel that opens in response to stretch forces in the membrane lipid bilayer. May participate in the regulation of osmotic pressure changes within the cell. The polypeptide is Large-conductance mechanosensitive channel (Cupriavidus pinatubonensis (strain JMP 134 / LMG 1197) (Cupriavidus necator (strain JMP 134))).